Consider the following 256-residue polypeptide: Glutamate racemase (256 aa).

Residues 12–13 (DS) and 44–45 (YG) contribute to the substrate site. The Proton donor/acceptor role is filled by C75. 76-77 (NT) contributes to the substrate binding site. C186 (proton donor/acceptor) is an active-site residue. Residue 187-188 (TH) coordinates substrate.

This sequence belongs to the aspartate/glutamate racemases family.

It catalyses the reaction L-glutamate = D-glutamate. The protein operates within cell wall biogenesis; peptidoglycan biosynthesis. Functionally, provides the (R)-glutamate required for cell wall biosynthesis. This Clostridium acetobutylicum (strain ATCC 824 / DSM 792 / JCM 1419 / IAM 19013 / LMG 5710 / NBRC 13948 / NRRL B-527 / VKM B-1787 / 2291 / W) protein is Glutamate racemase.